Consider the following 1474-residue polypeptide: Alpha-2-macroglobulin (1474 aa).

A signal peptide spans 1–23 (MGKNKLLHPSLVLLLLVLLPTDA). Cysteine 48 and cysteine 86 are joined by a disulfide. N-linked (GlcNAc...) asparagine glycosylation is found at asparagine 55, asparagine 70, and asparagine 247. Cystine bridges form between cysteine 251/cysteine 299 and cysteine 269/cysteine 287. 2 N-linked (GlcNAc...) asparagine glycosylation sites follow: asparagine 396 and asparagine 410. Cystine bridges form between cysteine 470–cysteine 563, cysteine 595–cysteine 771, cysteine 642–cysteine 689, cysteine 821–cysteine 849, cysteine 847–cysteine 883, cysteine 921–cysteine 1321, cysteine 1079–cysteine 1127, and cysteine 1352–cysteine 1467. A bait region region spans residues 690 to 728 (PQLQQYEMHGPEGLRVGFYESDVMGRGHARLVHAEEPPT). Residues glutamine 693 and glutamine 694 each participate in an isoglutamyl lysine isopeptide (Gln-Lys) (interchain with K-? in other proteins) cross-link. 3 inhibitory regions span residues 704–709 (RVGFYE), 719–723 (RLVHA), and 730–735 (TVRKYF). N-linked (GlcNAc...) asparagine glycosylation is present at asparagine 869. The isoglutamyl cysteine thioester (Cys-Gln) cross-link spans 972-975 (CGEQ). Asparagine 991 carries an N-linked (GlcNAc...) asparagine glycan. Asparagine 1424 carries N-linked (GlcNAc...) asparagine glycosylation.

It belongs to the protease inhibitor I39 (alpha-2-macroglobulin) family. As to quaternary structure, homotetramer; disulfide-linked. As to expression, plasma.

The protein localises to the secreted. In terms of biological role, is able to inhibit all four classes of proteinases by a unique 'trapping' mechanism. This protein has a peptide stretch, called the 'bait region' which contains specific cleavage sites for different proteinases. When a proteinase cleaves the bait region, a conformational change is induced in the protein which traps the proteinase. The entrapped enzyme remains active against low molecular weight substrates (activity against high molecular weight substrates is greatly reduced). Following cleavage in the bait region a thioester bond is hydrolyzed and mediates the covalent binding of the protein to the proteinase. The polypeptide is Alpha-2-macroglobulin (A2M) (Pongo abelii (Sumatran orangutan)).